A 391-amino-acid chain; its full sequence is Chaperone protein DnaJ (391 aa).

Residues cysteine 6–glycine 71 enclose the J domain. The CR-type zinc finger occupies glycine 137–lysine 215. Cysteine 150, cysteine 153, cysteine 167, cysteine 170, cysteine 189, cysteine 192, cysteine 203, and cysteine 206 together coordinate Zn(2+). 4 CXXCXGXG motif repeats span residues cysteine 150–glycine 157, cysteine 167–glycine 174, cysteine 189–glycine 196, and cysteine 203–glycine 210. The tract at residues phenylalanine 372–serine 391 is disordered.

The protein belongs to the DnaJ family. In terms of assembly, homodimer. Zn(2+) is required as a cofactor.

It is found in the cytoplasm. Functionally, participates actively in the response to hyperosmotic and heat shock by preventing the aggregation of stress-denatured proteins and by disaggregating proteins, also in an autonomous, DnaK-independent fashion. Unfolded proteins bind initially to DnaJ; upon interaction with the DnaJ-bound protein, DnaK hydrolyzes its bound ATP, resulting in the formation of a stable complex. GrpE releases ADP from DnaK; ATP binding to DnaK triggers the release of the substrate protein, thus completing the reaction cycle. Several rounds of ATP-dependent interactions between DnaJ, DnaK and GrpE are required for fully efficient folding. Also involved, together with DnaK and GrpE, in the DNA replication of plasmids through activation of initiation proteins. This Rhodopirellula baltica (strain DSM 10527 / NCIMB 13988 / SH1) protein is Chaperone protein DnaJ.